A 224-amino-acid polypeptide reads, in one-letter code: Metalloproteinase inhibitor 4 (224 aa).

The N-terminal stretch at 1 to 29 (MPWSPLAALSWALVLRLLALLWPPGRGEA) is a signal peptide. Cysteine 30 contacts Zn(2+). Involved in metalloproteinase-binding regions lie at residues 30 to 33 (CSCA) and 99 to 100 (SS). Intrachain disulfides connect cysteine 30/cysteine 102, cysteine 32/cysteine 131, cysteine 42/cysteine 156, cysteine 158/cysteine 205, cysteine 163/cysteine 168, and cysteine 176/cysteine 197. Residues 30-156 (CSCAPAHPQQ…SLNHHYHQNC (127 aa)) enclose the NTR domain.

The protein belongs to the protease inhibitor I35 (TIMP) family. Expressed in brain, heart, ovary and skeletal muscle.

Its subcellular location is the secreted. In terms of biological role, complexes with metalloproteinases (such as collagenases) and irreversibly inactivates them by binding to their catalytic zinc cofactor. In Mus musculus (Mouse), this protein is Metalloproteinase inhibitor 4 (Timp4).